The sequence spans 292 residues: 4-hydroxybenzoate octaprenyltransferase (292 aa).

8 helical membrane-spanning segments follow: residues 20–40, 43–63, 94–114, 135–155, 160–180, 209–229, 234–254, and 266–286; these read IGIL…ADGM, PMIL…GCAI, LLIA…LNLL, FFAM…PMAF, GTVP…VIAY, VAGI…AGIL, IWFY…YGMI, and FLHN…DTLF.

It belongs to the UbiA prenyltransferase family. Mg(2+) serves as cofactor.

The protein localises to the cell inner membrane. It catalyses the reaction all-trans-octaprenyl diphosphate + 4-hydroxybenzoate = 4-hydroxy-3-(all-trans-octaprenyl)benzoate + diphosphate. Its pathway is cofactor biosynthesis; ubiquinone biosynthesis. Catalyzes the prenylation of para-hydroxybenzoate (PHB) with an all-trans polyprenyl group. Mediates the second step in the final reaction sequence of ubiquinone-8 (UQ-8) biosynthesis, which is the condensation of the polyisoprenoid side chain with PHB, generating the first membrane-bound Q intermediate 3-octaprenyl-4-hydroxybenzoate. The protein is 4-hydroxybenzoate octaprenyltransferase of Nitrosomonas europaea (strain ATCC 19718 / CIP 103999 / KCTC 2705 / NBRC 14298).